A 379-amino-acid chain; its full sequence is UDP-N-acetylglucosamine--N-acetylmuramyl-(pentapeptide) pyrophosphoryl-undecaprenol N-acetylglucosamine transferase (379 aa).

Residues 10-12 (TAG), Asn-124, Arg-161, Ser-195, and Gln-291 contribute to the UDP-N-acetyl-alpha-D-glucosamine site.

This sequence belongs to the glycosyltransferase 28 family. MurG subfamily.

The protein localises to the cell membrane. It catalyses the reaction di-trans,octa-cis-undecaprenyl diphospho-N-acetyl-alpha-D-muramoyl-L-alanyl-D-glutamyl-meso-2,6-diaminopimeloyl-D-alanyl-D-alanine + UDP-N-acetyl-alpha-D-glucosamine = di-trans,octa-cis-undecaprenyl diphospho-[N-acetyl-alpha-D-glucosaminyl-(1-&gt;4)]-N-acetyl-alpha-D-muramoyl-L-alanyl-D-glutamyl-meso-2,6-diaminopimeloyl-D-alanyl-D-alanine + UDP + H(+). It functions in the pathway cell wall biogenesis; peptidoglycan biosynthesis. Its function is as follows. Cell wall formation. Catalyzes the transfer of a GlcNAc subunit on undecaprenyl-pyrophosphoryl-MurNAc-pentapeptide (lipid intermediate I) to form undecaprenyl-pyrophosphoryl-MurNAc-(pentapeptide)GlcNAc (lipid intermediate II). This Thermobifida fusca (strain YX) protein is UDP-N-acetylglucosamine--N-acetylmuramyl-(pentapeptide) pyrophosphoryl-undecaprenol N-acetylglucosamine transferase.